Reading from the N-terminus, the 383-residue chain is F-box/kelch-repeat protein At2g29830 (383 aa).

A disordered region spans residues 1 to 21 (MVVLSEIPGDPNEDNQNENPQ). Over residues 11–21 (PNEDNQNENPQ) the composition is skewed to acidic residues. The region spanning 27–73 (LPILLQLPEELIASIVALIPRCHYPSLSLVSRAFRHLITSQELYVAR) is the F-box domain. Kelch repeat units follow at residues 130–178 (KMYV…IIDG), 179–224 (RIYV…FITY), 226–272 (VMQG…VVGD), 274–317 (LYAL…YTST), and 324–370 (KLVI…RDLP).

The polypeptide is F-box/kelch-repeat protein At2g29830 (Arabidopsis thaliana (Mouse-ear cress)).